The following is a 311-amino-acid chain: MKKEVIVGSRDSALALWQTNWVVERLSKIHPEINFKIVTMKTKGDKILDVALAKIGDKGLFTKELEHALLNKTIDMAVHSMKDLPTVLPEGLKIGAFCEREYPGDVFISPKGFKFLELPQGARIGTSSLRRIAQILAVRPDLQAIPLRGNLPTRFRKMEEMDLDGIILAYAGVKRLGYEDKITEMLSFDLCLPAVGQGSIGVEIRADDTFIEELLKPIDHFATNRAIRAERAFLKRLEGGCQIPIGAYSEVKENRLHLKGVVASLDGKLVIKGEKEGSIEEPEKVGISLAEELLTKGAQKILEEIRRDANE.

Residue cysteine 241 is modified to S-(dipyrrolylmethanemethyl)cysteine.

Belongs to the HMBS family. As to quaternary structure, monomer. Requires dipyrromethane as cofactor.

The enzyme catalyses 4 porphobilinogen + H2O = hydroxymethylbilane + 4 NH4(+). Its pathway is porphyrin-containing compound metabolism; protoporphyrin-IX biosynthesis; coproporphyrinogen-III from 5-aminolevulinate: step 2/4. In terms of biological role, tetrapolymerization of the monopyrrole PBG into the hydroxymethylbilane pre-uroporphyrinogen in several discrete steps. This is Porphobilinogen deaminase from Carboxydothermus hydrogenoformans (strain ATCC BAA-161 / DSM 6008 / Z-2901).